Here is a 350-residue protein sequence, read N- to C-terminus: 4-hydroxy-3-methylbut-2-enyl diphosphate reductase (350 aa).

C19 serves as a coordination point for [4Fe-4S] cluster. Residues H48 and H84 each contribute to the (2E)-4-hydroxy-3-methylbut-2-enyl diphosphate site. Positions 48 and 84 each coordinate dimethylallyl diphosphate. Isopentenyl diphosphate is bound by residues H48 and H84. Residue C106 coordinates [4Fe-4S] cluster. H134 is a binding site for (2E)-4-hydroxy-3-methylbut-2-enyl diphosphate. H134 serves as a coordination point for dimethylallyl diphosphate. Position 134 (H134) interacts with isopentenyl diphosphate. E136 (proton donor) is an active-site residue. T175 is a (2E)-4-hydroxy-3-methylbut-2-enyl diphosphate binding site. Residue C205 coordinates [4Fe-4S] cluster. (2E)-4-hydroxy-3-methylbut-2-enyl diphosphate is bound by residues S233, S234, N235, and S278. S233, S234, N235, and S278 together coordinate dimethylallyl diphosphate. Isopentenyl diphosphate-binding residues include S233, S234, N235, and S278.

Belongs to the IspH family. [4Fe-4S] cluster is required as a cofactor.

It catalyses the reaction isopentenyl diphosphate + 2 oxidized [2Fe-2S]-[ferredoxin] + H2O = (2E)-4-hydroxy-3-methylbut-2-enyl diphosphate + 2 reduced [2Fe-2S]-[ferredoxin] + 2 H(+). The catalysed reaction is dimethylallyl diphosphate + 2 oxidized [2Fe-2S]-[ferredoxin] + H2O = (2E)-4-hydroxy-3-methylbut-2-enyl diphosphate + 2 reduced [2Fe-2S]-[ferredoxin] + 2 H(+). It functions in the pathway isoprenoid biosynthesis; dimethylallyl diphosphate biosynthesis; dimethylallyl diphosphate from (2E)-4-hydroxy-3-methylbutenyl diphosphate: step 1/1. The protein operates within isoprenoid biosynthesis; isopentenyl diphosphate biosynthesis via DXP pathway; isopentenyl diphosphate from 1-deoxy-D-xylulose 5-phosphate: step 6/6. Its function is as follows. Catalyzes the conversion of 1-hydroxy-2-methyl-2-(E)-butenyl 4-diphosphate (HMBPP) into a mixture of isopentenyl diphosphate (IPP) and dimethylallyl diphosphate (DMAPP). Acts in the terminal step of the DOXP/MEP pathway for isoprenoid precursor biosynthesis. The chain is 4-hydroxy-3-methylbut-2-enyl diphosphate reductase from Brucella anthropi (strain ATCC 49188 / DSM 6882 / CCUG 24695 / JCM 21032 / LMG 3331 / NBRC 15819 / NCTC 12168 / Alc 37) (Ochrobactrum anthropi).